Consider the following 117-residue polypeptide: Large ribosomal subunit protein uL18 (117 aa).

It belongs to the universal ribosomal protein uL18 family. Part of the 50S ribosomal subunit; part of the 5S rRNA/L5/L18/L25 subcomplex. Contacts the 5S and 23S rRNAs.

This is one of the proteins that bind and probably mediate the attachment of the 5S RNA into the large ribosomal subunit, where it forms part of the central protuberance. In Cronobacter sakazakii (strain ATCC BAA-894) (Enterobacter sakazakii), this protein is Large ribosomal subunit protein uL18.